A 141-amino-acid chain; its full sequence is Galactose-6-phosphate isomerase subunit LacA (141 aa).

It belongs to the LacAB/RpiB family. As to quaternary structure, heteromultimeric protein consisting of LacA and LacB.

The catalysed reaction is aldehydo-D-galactose 6-phosphate = keto-D-tagatose 6-phosphate. It functions in the pathway carbohydrate metabolism; D-galactose 6-phosphate degradation; D-tagatose 6-phosphate from D-galactose 6-phosphate: step 1/1. This is Galactose-6-phosphate isomerase subunit LacA from Streptococcus pneumoniae (strain 70585).